We begin with the raw amino-acid sequence, 1637 residues long: Serine/threonine-protein kinase Genghis Khan (1637 aa).

Residues 100–369 (FDILKIIGRG…IQDFMDHPWF (270 aa)) enclose the Protein kinase domain. Residues 106-114 (IGRGAFGEV) and K129 each bind ATP. Residue D224 is the Proton acceptor of the active site. Positions 370 to 440 (VGIDWKNIRQ…SLTSSSTLDS (71 aa)) constitute an AGC-kinase C-terminal domain. Coiled coils occupy residues 473-587 (VDSV…EDAV), 643-688 (SEKL…LKYT), and 839-881 (DELS…DLQK). Residues 538 to 575 (RNQKQKLSRQVRDKEEELDGAMQKNDSLRNELRKSDKT) are disordered. Residues 563–575 (DSLRNELRKSDKT) are compositionally biased toward basic and acidic residues. T895 carries the phosphothreonine modification. A disordered region spans residues 952 to 971 (NNKDHSSMKEASVSDLSREE). Residues 989 to 1039 (IHQFLVRTFSSPTKCNHCTSLMVGLTRQGVVCEICGFACHTICCQKVPTTC) form a Phorbol-ester/DAG-type zinc finger. Positions 1059 to 1177 (GTAYEGYVKV…WVIALGELHR (119 aa)) constitute a PH domain. In terms of domain architecture, CNH spans 1203-1489 (IRNALCSVII…LPLNNLGNVV (287 aa)). In terms of domain architecture, CRIB spans 1546–1559 (ISAPTNFNHISHMG). S1584 is modified (phosphoserine). The interval 1611–1637 (DYGNDNIISRTPSPMASSFMDGLSNND) is disordered. Positions 1616–1626 (NIISRTPSPMA) are enriched in polar residues.

The protein belongs to the protein kinase superfamily. AGC Ser/Thr protein kinase family. DMPK subfamily. As to quaternary structure, interacts tightly with GTP-bound but not GDP-bound Cdc42.

It catalyses the reaction L-seryl-[protein] + ATP = O-phospho-L-seryl-[protein] + ADP + H(+). The catalysed reaction is L-threonyl-[protein] + ATP = O-phospho-L-threonyl-[protein] + ADP + H(+). Its function is as follows. Acts as a downstream effector for the regulation of actin polymerization by Cdc42. This chain is Serine/threonine-protein kinase Genghis Khan (gek), found in Drosophila melanogaster (Fruit fly).